Consider the following 152-residue polypeptide: Protein-export protein SecB (152 aa).

The protein belongs to the SecB family. As to quaternary structure, homotetramer, a dimer of dimers. One homotetramer interacts with 1 SecA dimer.

Its subcellular location is the cytoplasm. One of the proteins required for the normal export of preproteins out of the cell cytoplasm. It is a molecular chaperone that binds to a subset of precursor proteins, maintaining them in a translocation-competent state. It also specifically binds to its receptor SecA. This Rickettsia bellii (strain RML369-C) protein is Protein-export protein SecB.